The following is an 83-amino-acid chain: Sulfur carrier protein TusA (83 aa).

Catalysis depends on Cys19, which acts as the Cysteine persulfide intermediate.

This sequence belongs to the sulfur carrier protein TusA family.

It localises to the cytoplasm. In terms of biological role, sulfur carrier protein which probably makes part of a sulfur-relay system. This Aliivibrio fischeri (strain ATCC 700601 / ES114) (Vibrio fischeri) protein is Sulfur carrier protein TusA.